The following is an 839-amino-acid chain: Protein translocase subunit SecA (839 aa).

Residues Q86, 104 to 108 (GEGKT), and D493 contribute to the ATP site. The segment at 794 to 839 (GIDMDNLQTSGPSDRPDPETSGDADPKNRAQRRAQEQERKRQNKKQ) is disordered. Basic and acidic residues predominate over residues 807 to 833 (DRPDPETSGDADPKNRAQRRAQEQERK).

It belongs to the SecA family. As to quaternary structure, monomer and homodimer. Part of the essential Sec protein translocation apparatus which comprises SecA, SecYEG and auxiliary proteins SecDF. Other proteins may also be involved.

The protein localises to the cell membrane. Its subcellular location is the cytoplasm. It catalyses the reaction ATP + H2O + cellular proteinSide 1 = ADP + phosphate + cellular proteinSide 2.. Part of the Sec protein translocase complex. Interacts with the SecYEG preprotein conducting channel. Has a central role in coupling the hydrolysis of ATP to the transfer of proteins into and across the cell membrane, serving as an ATP-driven molecular motor driving the stepwise translocation of polypeptide chains across the membrane. The protein is Protein translocase subunit SecA of Brevibacillus brevis (strain 47 / JCM 6285 / NBRC 100599).